The chain runs to 334 residues: Nucleoid-associated protein PMI0825 (334 aa).

The protein belongs to the YejK family.

The protein resides in the cytoplasm. The protein localises to the nucleoid. This is Nucleoid-associated protein PMI0825 from Proteus mirabilis (strain HI4320).